The following is a 199-amino-acid chain: CASP-like protein 2B1 (199 aa).

Topologically, residues 1 to 26 are cytoplasmic; the sequence is MSYLGVGLSPVNVAGTKMKLMDRKVR. The chain crosses the membrane as a helical span at residues 27–47; that stretch reads LTELILRCSVCALALVAAILI. Residues 48 to 69 lie on the Extracellular side of the membrane; the sequence is ATDTQVKEIFTIQKKAKYTDMK. The helical transmembrane segment at 70–90 threads the bilayer; it reads ALVFLVVVNGIAAAYSLLHMV. Over 91-106 the chain is Cytoplasmic; the sequence is RCVVGMMKGSVLFSKP. The chain crosses the membrane as a helical span at residues 107 to 127; the sequence is LAWAIFSGDQAIAYLTVAGVA. The Extracellular portion of the chain corresponds to 128–164; sequence AAAQSAAFAKLGEPELQWMKICTIYGKFCNQVGEGIA. Residues 165-185 form a helical membrane-spanning segment; sequence TALLASIGMVLISSISAFALF. The Cytoplasmic portion of the chain corresponds to 186–199; that stretch reads RLYGGNKAQQGSRW.

Belongs to the Casparian strip membrane proteins (CASP) family. Homodimer and heterodimers.

The protein resides in the cell membrane. This is CASP-like protein 2B1 from Eutrema halophilum (Salt cress).